Here is a 417-residue protein sequence, read N- to C-terminus: MLEQMGKAAKAASWQLAVLTSAQKDSALQVIADSLEANSQSILDANAQDMAEARRNGLVDALLDRLLLNPARLSAIAADVRQVCRLTDPVGQVIDGQRLDSGLSLERRRVPLGVVGVIYEARPNVTVDVAALCLKTGNAVILRGGKETYRTNAATVKVIQQALTDCGLPACAVQAIEDPDRALVNALLRLDRYVDMLIPRGGAGLHKLCREQSTIPVITGGIGVCHIYVDDTIDFEQALPVIENAKIQRPSACNSLETLLVHQAIAERFLPRLSHHMHTLGVTLHADDNARPYLADGPATCVAVTEADYHDEWLSRDLNVKLMDGFEQAVAHIRHYGTQHSDAILTRSIQAADRFVREVDSSVVYVNASTRFTDGGQFGLGAEVAVSTQKLHARGPMGLEALTTYKWIGYGDNLSRP.

Belongs to the gamma-glutamyl phosphate reductase family.

The protein localises to the cytoplasm. It carries out the reaction L-glutamate 5-semialdehyde + phosphate + NADP(+) = L-glutamyl 5-phosphate + NADPH + H(+). It functions in the pathway amino-acid biosynthesis; L-proline biosynthesis; L-glutamate 5-semialdehyde from L-glutamate: step 2/2. Catalyzes the NADPH-dependent reduction of L-glutamate 5-phosphate into L-glutamate 5-semialdehyde and phosphate. The product spontaneously undergoes cyclization to form 1-pyrroline-5-carboxylate. This is Gamma-glutamyl phosphate reductase from Sodalis glossinidius (strain morsitans).